The sequence spans 554 residues: 3-(3-hydroxy-phenyl)propionate/3-hydroxycinnamic acid hydroxylase (554 aa).

FAD contacts are provided by residues Gln17–Lys46 and Phe285–Asp295.

The protein belongs to the PheA/TfdB FAD monooxygenase family. FAD is required as a cofactor.

It catalyses the reaction 3-(3-hydroxyphenyl)propanoate + NADH + O2 + H(+) = 3-(2,3-dihydroxyphenyl)propanoate + NAD(+) + H2O. The catalysed reaction is (2E)-3-(3-hydroxyphenyl)prop-2-enoate + NADH + O2 + H(+) = (2E)-3-(2,3-dihydroxyphenyl)prop-2-enoate + NAD(+) + H2O. The protein operates within aromatic compound metabolism; 3-phenylpropanoate degradation. Functionally, catalyzes the insertion of one atom of molecular oxygen into position 2 of the phenyl ring of 3-(3-hydroxyphenyl)propionate (3-HPP) and hydroxycinnamic acid (3HCI). In Escherichia coli O81 (strain ED1a), this protein is 3-(3-hydroxy-phenyl)propionate/3-hydroxycinnamic acid hydroxylase.